Here is a 1104-residue protein sequence, read N- to C-terminus: Transient receptor potential cation channel subfamily M member 8 (1104 aa).

The segment at 1–22 (MSFEGARLSMRSRRNGTMGSTR) is disordered. Residues 1 to 733 (MSFEGARLSM…LWYYVAFFTS (733 aa)) lie on the Cytoplasmic side of the membrane. Residues 734–758 (PFVVFSWNVVFYIAFLLLFAYVLLM) traverse the membrane as a helical segment. The Extracellular segment spans residues 759 to 765 (DFHSVPH). The helical transmembrane segment at 766–789 (TPELILYALVFVLFCDEVRQWYMN) threads the bilayer. Ca(2+) is bound by residues glutamate 782 and glutamine 785. At 790 to 796 (GVNYFTD) the chain is on the cytoplasmic side. Residues 797–817 (LWNVMDTLGLFYFIAGIVFRL) form a helical membrane-spanning segment. Residues asparagine 799 and aspartate 802 each coordinate Ca(2+). At 818–822 (HSSNK) the chain is on the extracellular side. The helical transmembrane segment at 823–848 (SSLYSGRVIFCLDYIIFTLRLIHIFT) threads the bilayer. Topologically, residues 849–853 (VSRNL) are cytoplasmic. A helical transmembrane segment spans residues 854–890 (GPKIIMLQRMLIDVFFFLFLFAVWMVAFGVARQGILR). Residues 891–895 (QNEQR) are Extracellular-facing. The segment at residues 896-912 (WRWIFRSVIYEPYLAMF) is an intramembrane region (pore-forming). Residues 913 to 953 (GQVPSDVDSTTYDFSHCTFSGNESKPLCVELDEHNLPRFPE) lie on the Extracellular side of the membrane. A glycan (N-linked (GlcNAc...) (complex) asparagine) is linked at asparagine 934. Residues 954-984 (WITIPLVCIYMLSTNILLVNLLVAMFGYTVG) traverse the membrane as a helical segment. The Cytoplasmic portion of the chain corresponds to 985–1104 (IVQENNDQVW…LLKEIANNIK (120 aa)). Positions 1069 to 1104 (TKANDNSEEMRHRFRQLDSKLNDLKSLLKEIANNIK) form a coiled coil.

The protein belongs to the transient receptor (TC 1.A.4) family. LTrpC subfamily. TRPM8 sub-subfamily. Homotetramer. Interacts (via N-terminus and C-terminus domains) with TCAF1; the interaction stimulates TRPM8 channel activity. Interacts (via N-terminus and C-terminus domains) with TCAF2; the interaction inhibits TRPM8 channel activity. N-glycosylation is not essential for but facilitates cell surface expression, multimerization, association with lipid rafts and ion channel activity. As to expression, expressed in dorsal root and trigeminal ganglia. Specifically expressed in a subset of pain- and temperature-sensing neurons. Not expressed in heavily myelinated neurons. Not expressed in neurons expressing TRPA1 or TRPV1.

It is found in the cell membrane. The protein resides in the membrane raft. It carries out the reaction Ca(2+)(in) = Ca(2+)(out). It catalyses the reaction Na(+)(in) = Na(+)(out). The catalysed reaction is K(+)(in) = K(+)(out). With respect to regulation, activated by cold temperatures and by both natural and synthetic cooling compounds such as menthol and icilin. Activation of the channel requires the presence of PI(4,5)P2; PI(4,5)P2 is necessary to gate the channel. Activated by intracellular Ca(2+). Its function is as follows. Non-selective ion channel permeable to monovalent and divalent cations, including Na(+), K(+), and Ca(2+), with higher permeability for Ca(2+). Activated by multiple factors, such as temperature, voltage, pressure, and changes in osmolality. Activated by cool temperatures (&lt;23-28 degrees Celsius) and by chemical ligands evoking a sensation of coolness, such as menthol and icilin, therefore plays a central role in the detection of environmental cold temperatures. TRPM8 is a voltage-dependent channel; its activation by cold or chemical ligands shifts its voltage thresholds towards physiological membrane potentials, leading to the opening of the channel. In addition to its critical role in temperature sensing, regulates basal tear secretion by sensing evaporation-induced cooling and changes in osmolality. This chain is Transient receptor potential cation channel subfamily M member 8 (Trpm8), found in Mus musculus (Mouse).